The sequence spans 180 residues: Ribulose bisphosphate carboxylase small subunit, chloroplastic 2 (180 aa).

A chloroplast-targeting transit peptide spans 1–56; it reads MASMISSSAVTTVSRASRGQSAAVAPFGGLKSMTGFPVKKVNTDITSITSNGGRVK.

Belongs to the RuBisCO small chain family. In terms of assembly, heterohexadecamer of 8 large and 8 small subunits.

Its subcellular location is the plastid. The protein resides in the chloroplast. RuBisCO catalyzes two reactions: the carboxylation of D-ribulose 1,5-bisphosphate, the primary event in carbon dioxide fixation, as well as the oxidative fragmentation of the pentose substrate. Both reactions occur simultaneously and in competition at the same active site. Although the small subunit is not catalytic it is essential for maximal activity. The chain is Ribulose bisphosphate carboxylase small subunit, chloroplastic 2 from Pisum sativum (Garden pea).